Reading from the N-terminus, the 500-residue chain is Probable cytosol aminopeptidase (500 aa).

Mn(2+)-binding residues include Lys-265 and Asp-270. The active site involves Lys-277. The Mn(2+) site is built by Asp-288, Asp-347, and Glu-349. The active site involves Arg-351.

The protein belongs to the peptidase M17 family. It depends on Mn(2+) as a cofactor.

It localises to the cytoplasm. The catalysed reaction is Release of an N-terminal amino acid, Xaa-|-Yaa-, in which Xaa is preferably Leu, but may be other amino acids including Pro although not Arg or Lys, and Yaa may be Pro. Amino acid amides and methyl esters are also readily hydrolyzed, but rates on arylamides are exceedingly low.. It carries out the reaction Release of an N-terminal amino acid, preferentially leucine, but not glutamic or aspartic acids.. Functionally, presumably involved in the processing and regular turnover of intracellular proteins. Catalyzes the removal of unsubstituted N-terminal amino acids from various peptides. This is Probable cytosol aminopeptidase from Rickettsia africae (strain ESF-5).